The following is a 635-amino-acid chain: MPIQILPPQLANQIAAGEVVERPASVVKELVENSLDAGATRIDIDIERGGAKLIRIRDNGCGISKDDLALALARHATSKISSLEDLEAILSMGFRGEALASISSVSRLILTSRTAEQSEAWQAYAEGRDMAVTIKPAAHPVGSTLEVLDLFYNTPARRKFMRTEKTEFGHIDEVVRRIALARFDVAINLNHNGKLIRQYRAAPDPAQHERRLASICGPAFLQHALAIAWQHGDLNIHGWVADPAASHTLSEMQYCYVNNRMMRDRLINHAIRQAYQDRLNDAQQPAYVLYLDIDPHQVDVNVHPAKHEVRFHQARLVHDFIYQAVTAVLQQTNAPILNISEEGEVDAPRWQQENRVAAGTNKYAQPEAAKSSAAEQAVARERSSARERAAPAYKEDHPYQKQQGELYRQLLQPSAAAKPATSPAAIPASSVSSPSIPVQRITQAEEPLHGDNYSFGRVLTVFPPCYALIEYQGGVALLSLTVAERWLKQAQLSPPEEGLRPQPLLIPLKITLDKNEIAACQNHEKLLITMGIELSVEQGRATLRAVSLPLRQQNLQKLIPELLGYLSQHEEISPDTLATWLARHLGSEHEVWNVSQAIQLLTEVERLCPQLVQSPPAGLLQPIDIKAALATLTHE.

The segment at 359–399 (GTNKYAQPEAAKSSAAEQAVARERSSARERAAPAYKEDHPY) is disordered. Over residues 364–377 (AQPEAAKSSAAEQA) the composition is skewed to low complexity. Positions 378-399 (VARERSSARERAAPAYKEDHPY) are enriched in basic and acidic residues.

Belongs to the DNA mismatch repair MutL/HexB family.

Functionally, this protein is involved in the repair of mismatches in DNA. It is required for dam-dependent methyl-directed DNA mismatch repair. May act as a 'molecular matchmaker', a protein that promotes the formation of a stable complex between two or more DNA-binding proteins in an ATP-dependent manner without itself being part of a final effector complex. This chain is DNA mismatch repair protein MutL, found in Yersinia pseudotuberculosis serotype O:1b (strain IP 31758).